A 204-amino-acid chain; its full sequence is MSREQLSQEIIEAGRFLYGRGWSPATSSNYSVRLSASEALLTVSGKHKGQLGPDDVLATDLAGNSLEPGKKPSAETLLHTQLYLCRPQVGAVLHTHSVNATVLSRLTASDHLVFEDYELQKAFNGVLTHESQVVVPIFDNDQDIARLAANVQPWLDAHPECAGYLIRGHGLYTWGARMSDALRQIEAFEFLFECELKMRTVMNR.

Zn(2+)-binding residues include H94 and H96.

Belongs to the aldolase class II family. MtnB subfamily. Zn(2+) is required as a cofactor.

It carries out the reaction 5-(methylsulfanyl)-D-ribulose 1-phosphate = 5-methylsulfanyl-2,3-dioxopentyl phosphate + H2O. It participates in amino-acid biosynthesis; L-methionine biosynthesis via salvage pathway; L-methionine from S-methyl-5-thio-alpha-D-ribose 1-phosphate: step 2/6. Its function is as follows. Catalyzes the dehydration of methylthioribulose-1-phosphate (MTRu-1-P) into 2,3-diketo-5-methylthiopentyl-1-phosphate (DK-MTP-1-P). The sequence is that of Methylthioribulose-1-phosphate dehydratase from Pseudomonas syringae pv. tomato (strain ATCC BAA-871 / DC3000).